The following is a 273-amino-acid chain: Phosphatidylglycerol--prolipoprotein diacylglyceryl transferase (273 aa).

Helical transmembrane passes span 20–40 (LAVRWYALAYMVSFIIALPIA), 59–79 (FLFYAILGVLLGGRLGYVLFY), and 97–117 (GGMSFHGGALGVILALAYFSW). Arg142 lines the a 1,2-diacyl-sn-glycero-3-phospho-(1'-sn-glycerol) pocket. A run of 2 helical transmembrane segments spans residues 206–226 (FGFLSGLFLFGYACARSFCEF) and 243–263 (MGQLLCIPMALAGMGLMVYAM).

Belongs to the Lgt family.

The protein resides in the cell inner membrane. The catalysed reaction is L-cysteinyl-[prolipoprotein] + a 1,2-diacyl-sn-glycero-3-phospho-(1'-sn-glycerol) = an S-1,2-diacyl-sn-glyceryl-L-cysteinyl-[prolipoprotein] + sn-glycerol 1-phosphate + H(+). It participates in protein modification; lipoprotein biosynthesis (diacylglyceryl transfer). Its function is as follows. Catalyzes the transfer of the diacylglyceryl group from phosphatidylglycerol to the sulfhydryl group of the N-terminal cysteine of a prolipoprotein, the first step in the formation of mature lipoproteins. This Gluconobacter oxydans (strain 621H) (Gluconobacter suboxydans) protein is Phosphatidylglycerol--prolipoprotein diacylglyceryl transferase.